Consider the following 149-residue polypeptide: Down syndrome critical region protein 9 (149 aa).

The tract at residues 1 to 41 (MGRICPVNSRARRLRARPGRPSGDSLPYHQLQGGAPRLWSP) is disordered.

As to expression, testis specific.

The chain is Down syndrome critical region protein 9 (DSCR9) from Homo sapiens (Human).